Here is a 689-residue protein sequence, read N- to C-terminus: Glycine--tRNA ligase beta subunit (689 aa).

Belongs to the class-II aminoacyl-tRNA synthetase family. Tetramer of two alpha and two beta subunits.

The protein localises to the cytoplasm. The enzyme catalyses tRNA(Gly) + glycine + ATP = glycyl-tRNA(Gly) + AMP + diphosphate. The protein is Glycine--tRNA ligase beta subunit of Acinetobacter baumannii (strain AB307-0294).